The chain runs to 120 residues: Alpha-amylase inhibitor Haim-2 (120 aa).

An N-terminal signal peptide occupies residues 1-32; sequence MKRYVCSTFVACVMVLCVIPASGAAAHEAVAE. 2 disulfide bridges follow: Cys43/Cys59 and Cys77/Cys104.

Functionally, inhibits mammalian alpha-amylases specifically but has no action on plant and microbial alpha-amylases. The polypeptide is Alpha-amylase inhibitor Haim-2 (Streptomyces griseosporeus).